A 430-amino-acid chain; its full sequence is Methylthioribose kinase 1 (430 aa).

Residues 52–56 (DGNLN), Lys71, and 125–127 (RYI) each bind ATP. Asn56 lines the substrate pocket. Asp246 serves as a coordination point for substrate. Position 263–265 (263–265 (DPE)) interacts with ATP. Arg373 contributes to the substrate binding site.

Belongs to the methylthioribose kinase family. In terms of assembly, homodimer.

It carries out the reaction 5-(methylsulfanyl)-D-ribose + ATP = 5-(methylsulfanyl)-alpha-D-ribose 1-phosphate + ADP + H(+). It participates in amino-acid biosynthesis; L-methionine biosynthesis via salvage pathway; S-methyl-5-thio-alpha-D-ribose 1-phosphate from S-methyl-5'-thioadenosine (hydrolase route): step 2/2. Functionally, catalyzes the phosphorylation of methylthioribose into methylthioribose-1-phosphate. This is Methylthioribose kinase 1 from Oryza sativa subsp. japonica (Rice).